The following is a 126-amino-acid chain: C-type natriuretic peptide (126 aa).

Residues 1 to 23 (MHLSQLLACALLLALLSLRPSEA) form the signal peptide. Residues 20-71 (PSEAKPGAPPKVPRTPSGEEVAEPQAAGGGQKKGDKTPGGGGANLKDDRSRL) form a disordered region. A propeptide spanning residues 24–73 (KPGAPPKVPRTPSGEEVAEPQAAGGGQKKGDKTPGGGGANLKDDRSRLLR) is cleaved from the precursor. A compositionally biased stretch (gly residues) spans 46-62 (AGGGQKKGDKTPGGGGA). An intrachain disulfide couples C110 to C126.

Belongs to the natriuretic peptide family. Degraded by IDE (in vitro).

It is found in the secreted. In terms of biological role, hormone which plays a role in endochondral ossification through regulation of cartilaginous growth plate chondrocytes proliferation and differentiation. May also be vasoactive and natriuretic. Acts by specifically binding and stimulating NPR2 to produce cGMP. Binds the clearance receptor NPR3. The protein is C-type natriuretic peptide (NPPC) of Bos taurus (Bovine).